We begin with the raw amino-acid sequence, 393 residues long: D-alanyl-D-alanine carboxypeptidase DacA (393 aa).

The first 18 residues, 1–18 (MLKRTTKIAFLSSFVALS), serve as a signal peptide directing secretion. The active-site Acyl-ester intermediate is the Ser-65. Catalysis depends on Lys-68, which acts as the Proton acceptor. The active site involves Ser-128. Residue Lys-231 participates in substrate binding.

Belongs to the peptidase S11 family.

The protein resides in the cell inner membrane. It carries out the reaction Preferential cleavage: (Ac)2-L-Lys-D-Ala-|-D-Ala. Also transpeptidation of peptidyl-alanyl moieties that are N-acyl substituents of D-alanine.. Its pathway is cell wall biogenesis; peptidoglycan biosynthesis. In terms of biological role, removes C-terminal D-alanyl residues from sugar-peptide cell wall precursors. The sequence is that of D-alanyl-D-alanine carboxypeptidase DacA (dacA) from Haemophilus influenzae (strain ATCC 51907 / DSM 11121 / KW20 / Rd).